The sequence spans 282 residues: Pantothenate synthetase (282 aa).

Residue 26 to 33 (MGNLHDGH) participates in ATP binding. His-33 serves as the catalytic Proton donor. A (R)-pantoate-binding site is contributed by Gln-57. Beta-alanine is bound at residue Gln-57. ATP is bound at residue 148–151 (GKKD). Gln-154 lines the (R)-pantoate pocket. 185–188 (LSSR) is an ATP binding site.

It belongs to the pantothenate synthetase family. As to quaternary structure, homodimer.

The protein resides in the cytoplasm. It carries out the reaction (R)-pantoate + beta-alanine + ATP = (R)-pantothenate + AMP + diphosphate + H(+). It participates in cofactor biosynthesis; (R)-pantothenate biosynthesis; (R)-pantothenate from (R)-pantoate and beta-alanine: step 1/1. Catalyzes the condensation of pantoate with beta-alanine in an ATP-dependent reaction via a pantoyl-adenylate intermediate. This is Pantothenate synthetase from Polaromonas sp. (strain JS666 / ATCC BAA-500).